Consider the following 420-residue polypeptide: Gamma-glutamyl phosphate reductase (420 aa).

It belongs to the gamma-glutamyl phosphate reductase family.

It is found in the cytoplasm. It carries out the reaction L-glutamate 5-semialdehyde + phosphate + NADP(+) = L-glutamyl 5-phosphate + NADPH + H(+). Its pathway is amino-acid biosynthesis; L-proline biosynthesis; L-glutamate 5-semialdehyde from L-glutamate: step 2/2. Catalyzes the NADPH-dependent reduction of L-glutamate 5-phosphate into L-glutamate 5-semialdehyde and phosphate. The product spontaneously undergoes cyclization to form 1-pyrroline-5-carboxylate. In Streptococcus pneumoniae (strain Hungary19A-6), this protein is Gamma-glutamyl phosphate reductase.